A 159-amino-acid chain; its full sequence is Small ribosomal subunit protein uS17 (159 aa).

This sequence belongs to the universal ribosomal protein uS17 family.

The sequence is that of Small ribosomal subunit protein uS17 (RPS11) from Euphorbia esula (Leafy spurge).